Consider the following 1578-residue polypeptide: DNA-directed RNA polymerase subunit beta' (1578 aa).

Zn(2+) contacts are provided by cysteine 101, cysteine 103, cysteine 115, and cysteine 118. Mg(2+) contacts are provided by aspartate 1286, aspartate 1288, and aspartate 1290.

This sequence belongs to the RNA polymerase beta' chain family. RpoC1 subfamily. In terms of assembly, in plastids the minimal PEP RNA polymerase catalytic core is composed of four subunits: alpha, beta, beta', and beta''. When a (nuclear-encoded) sigma factor is associated with the core the holoenzyme is formed, which can initiate transcription. The cofactor is Mg(2+). Requires Zn(2+) as cofactor.

Its subcellular location is the plastid. The protein resides in the chloroplast. It catalyses the reaction RNA(n) + a ribonucleoside 5'-triphosphate = RNA(n+1) + diphosphate. Functionally, DNA-dependent RNA polymerase catalyzes the transcription of DNA into RNA using the four ribonucleoside triphosphates as substrates. In Tupiella akineta (Green alga), this protein is DNA-directed RNA polymerase subunit beta'.